A 532-amino-acid chain; its full sequence is Glucose-6-phosphate isomerase (532 aa).

The active-site Proton donor is E330. Active-site residues include H359 and K460.

The protein belongs to the GPI family.

The protein resides in the cytoplasm. It carries out the reaction alpha-D-glucose 6-phosphate = beta-D-fructose 6-phosphate. It participates in carbohydrate biosynthesis; gluconeogenesis. It functions in the pathway carbohydrate degradation; glycolysis; D-glyceraldehyde 3-phosphate and glycerone phosphate from D-glucose: step 2/4. Its function is as follows. Catalyzes the reversible isomerization of glucose-6-phosphate to fructose-6-phosphate. This Prochlorococcus marinus (strain MIT 9211) protein is Glucose-6-phosphate isomerase.